The primary structure comprises 251 residues: Ubiquinone/menaquinone biosynthesis C-methyltransferase UbiE (251 aa).

S-adenosyl-L-methionine is bound by residues Thr74, Asp95, and 123 to 124; that span reads NA.

The protein belongs to the class I-like SAM-binding methyltransferase superfamily. MenG/UbiE family.

It catalyses the reaction a 2-demethylmenaquinol + S-adenosyl-L-methionine = a menaquinol + S-adenosyl-L-homocysteine + H(+). The catalysed reaction is a 2-methoxy-6-(all-trans-polyprenyl)benzene-1,4-diol + S-adenosyl-L-methionine = a 5-methoxy-2-methyl-3-(all-trans-polyprenyl)benzene-1,4-diol + S-adenosyl-L-homocysteine + H(+). The protein operates within quinol/quinone metabolism; menaquinone biosynthesis; menaquinol from 1,4-dihydroxy-2-naphthoate: step 2/2. It functions in the pathway cofactor biosynthesis; ubiquinone biosynthesis. Its function is as follows. Methyltransferase required for the conversion of demethylmenaquinol (DMKH2) to menaquinol (MKH2) and the conversion of 2-polyprenyl-6-methoxy-1,4-benzoquinol (DDMQH2) to 2-polyprenyl-3-methyl-6-methoxy-1,4-benzoquinol (DMQH2). This Shewanella pealeana (strain ATCC 700345 / ANG-SQ1) protein is Ubiquinone/menaquinone biosynthesis C-methyltransferase UbiE.